Here is a 219-residue protein sequence, read N- to C-terminus: Charged multivesicular body protein 5 (219 aa).

A compositionally biased stretch (basic residues) spans 1-10; it reads MNRLFGKAKP. The tract at residues 1–21 is disordered; the sequence is MNRLFGKAKPKAPPPSLTDCI. K7 carries the (Microbial infection) N6-stearoyl lysine lipid modification. A coiled-coil region spans residues 26 to 179; that stretch reads SRAESIDKKI…LGDELLADED (154 aa). S86 is modified (phosphoserine). The segment at 121-158 is interaction with VTA1; that stretch reads KQVKIDQIEDLQDQLEDMMEDANEIQEALSRSYGTPEL. The disordered stretch occupies residues 188 to 219; sequence SAPAIPEGVPTDTKNKDGVLVDEFGLPQIPAS.

It belongs to the SNF7 family. In terms of assembly, probable peripherally associated component of the endosomal sorting required for transport complex III (ESCRT-III). ESCRT-III components are thought to multimerize to form a flat lattice on the perimeter membrane of the endosome. Several assembly forms of ESCRT-III may exist that interact and act sequentially. Interacts with VTA1; the interaction involves soluble CHMP5. Interacts with CHMP2A. Interacts with NOD2. Interacts with BROX. (Microbial infection) Stearoylated By S.flexneri N-epsilon-fatty acyltransferase IcsB, promoting S.flexneri evasion of autophagy. Post-translationally, ISGylated. Isgylation inhibits its interaction with VTA1.

Its subcellular location is the cytoplasm. The protein localises to the cytosol. It localises to the endosome membrane. The protein resides in the midbody. Functionally, probable peripherally associated component of the endosomal sorting required for transport complex III (ESCRT-III) which is involved in multivesicular bodies (MVBs) formation and sorting of endosomal cargo proteins into MVBs. MVBs contain intraluminal vesicles (ILVs) that are generated by invagination and scission from the limiting membrane of the endosome and mostly are delivered to lysosomes enabling degradation of membrane proteins, such as stimulated growth factor receptors, lysosomal enzymes and lipids. The MVB pathway appears to require the sequential function of ESCRT-O, -I,-II and -III complexes. ESCRT-III proteins mostly dissociate from the invaginating membrane before the ILV is released. The ESCRT machinery also functions in topologically equivalent membrane fission events, such as the terminal stages of cytokinesis and the budding of enveloped viruses (HIV-1 and other lentiviruses). ESCRT-III proteins are believed to mediate the necessary vesicle extrusion and/or membrane fission activities, possibly in conjunction with the AAA ATPase VPS4. Involved in HIV-1 p6- and p9-dependent virus release. The polypeptide is Charged multivesicular body protein 5 (CHMP5) (Homo sapiens (Human)).